The sequence spans 145 residues: LIM domain only protein 3 (145 aa).

2 consecutive LIM zinc-binding domains span residues 11–73 (KGCA…LFGV) and 75–137 (GNCA…GLMK).

In Bos taurus (Bovine), this protein is LIM domain only protein 3 (LMO3).